Consider the following 513-residue polypeptide: Type-2 serine--tRNA ligase (513 aa).

L-serine is bound at residue Ala-312. A Zn(2+)-binding site is contributed by Cys-314. L-serine is bound at residue Arg-344. ATP-binding positions include 344 to 346 and 355 to 356; these read RWE and RV. 361-363 provides a ligand contact to L-serine; sequence RVE. 2 residues coordinate Zn(2+): Glu-363 and Cys-467. Position 474 (Arg-474) interacts with ATP.

It belongs to the class-II aminoacyl-tRNA synthetase family. Type-2 seryl-tRNA synthetase subfamily. As to quaternary structure, homodimer. Requires Zn(2+) as cofactor.

The protein resides in the cytoplasm. The catalysed reaction is tRNA(Ser) + L-serine + ATP = L-seryl-tRNA(Ser) + AMP + diphosphate + H(+). The enzyme catalyses tRNA(Sec) + L-serine + ATP = L-seryl-tRNA(Sec) + AMP + diphosphate + H(+). The protein operates within aminoacyl-tRNA biosynthesis; selenocysteinyl-tRNA(Sec) biosynthesis; L-seryl-tRNA(Sec) from L-serine and tRNA(Sec): step 1/1. In terms of biological role, catalyzes the attachment of serine to tRNA(Ser). Is also able to aminoacylate tRNA(Sec) with serine, to form the misacylated tRNA L-seryl-tRNA(Sec), which will be further converted into selenocysteinyl-tRNA(Sec). The polypeptide is Type-2 serine--tRNA ligase (serS) (Methanothermobacter thermautotrophicus (strain ATCC 29096 / DSM 1053 / JCM 10044 / NBRC 100330 / Delta H) (Methanobacterium thermoautotrophicum)).